The following is a 186-amino-acid chain: Trafficking protein particle complex subunit 3 (186 aa).

This sequence belongs to the TRAPP small subunits family. BET3 subfamily. In terms of assembly, homodimer. Part of the multisubunit TRAPP (transport protein particle) complex.

The protein resides in the golgi apparatus. The protein localises to the cis-Golgi network. It is found in the endoplasmic reticulum. May play a role in vesicular transport from endoplasmic reticulum to Golgi. The sequence is that of Trafficking protein particle complex subunit 3 (trappc3) from Dictyostelium discoideum (Social amoeba).